A 194-amino-acid chain; its full sequence is Ras-related protein Rab-22A (194 aa).

A GTP-binding site is contributed by 12 to 20 (GDTGVGKSS). Residues 34-42 (INPTIGASF) carry the Effector region motif. Residues 60 to 64 (DTAGQ), 118 to 121 (NKCD), and 148 to 150 (SAK) contribute to the GTP site. Positions 170–194 (DANPASGGKGFKLRRQPSEPKRSCC) are disordered. Basic and acidic residues predominate over residues 185–194 (QPSEPKRSCC). S-geranylgeranyl cysteine attachment occurs at residues cysteine 193 and cysteine 194.

It belongs to the small GTPase superfamily. Rab family. Binds EEA1. Interacts (in its GTP-bound form) with RINL. Interacts directly with ZFYVE20. Interacts (in its GTP-bound form) with RABGEF1. As to expression, detected in brain and heart, and at lower levels in lung and spleen.

It localises to the endosome membrane. It is found in the cell membrane. The protein localises to the early endosome. Its subcellular location is the late endosome. The protein resides in the cell projection. It localises to the ruffle. It is found in the cytoplasmic vesicle. The protein localises to the phagosome. Its subcellular location is the phagosome membrane. Plays a role in endocytosis and intracellular protein transport. Mediates trafficking of TF from early endosomes to recycling endosomes. Required for NGF-mediated endocytosis of NTRK1, and subsequent neurite outgrowth. Binds GTP and GDP and has low GTPase activity. Alternates between a GTP-bound active form and a GDP-bound inactive form. The sequence is that of Ras-related protein Rab-22A (Rab22a) from Mus musculus (Mouse).